The sequence spans 362 residues: 3-dehydroquinate synthase (362 aa).

Residues aspartate 71–lysine 76, glycine 105–aspartate 109, threonine 129–threonine 130, lysine 142, lysine 151, and cysteine 169–threonine 172 each bind NAD(+). The Zn(2+) site is built by glutamate 184, histidine 247, and histidine 264.

This sequence belongs to the sugar phosphate cyclases superfamily. Dehydroquinate synthase family. The cofactor is Co(2+). It depends on Zn(2+) as a cofactor. NAD(+) is required as a cofactor.

It localises to the cytoplasm. It catalyses the reaction 7-phospho-2-dehydro-3-deoxy-D-arabino-heptonate = 3-dehydroquinate + phosphate. Its pathway is metabolic intermediate biosynthesis; chorismate biosynthesis; chorismate from D-erythrose 4-phosphate and phosphoenolpyruvate: step 2/7. Its function is as follows. Catalyzes the conversion of 3-deoxy-D-arabino-heptulosonate 7-phosphate (DAHP) to dehydroquinate (DHQ). This is 3-dehydroquinate synthase from Escherichia coli (strain K12 / MC4100 / BW2952).